The sequence spans 256 residues: tRNA pseudouridine synthase A (256 aa).

Residue aspartate 52 is the Nucleophile of the active site. Residue tyrosine 110 participates in substrate binding.

Belongs to the tRNA pseudouridine synthase TruA family. In terms of assembly, homodimer.

It catalyses the reaction uridine(38/39/40) in tRNA = pseudouridine(38/39/40) in tRNA. In terms of biological role, formation of pseudouridine at positions 38, 39 and 40 in the anticodon stem and loop of transfer RNAs. This is tRNA pseudouridine synthase A from Stenotrophomonas maltophilia (strain R551-3).